A 397-amino-acid chain; its full sequence is CCA-adding enzyme (397 aa).

G8 and R11 together coordinate ATP. The CTP site is built by G8 and R11. Mg(2+) is bound by residues E21 and D23. ATP is bound by residues R91, R137, and R140. CTP-binding residues include R91, R137, and R140. The HD domain occupies 213 to 324 (NLDAAIATLK…LALFNGCDAW (112 aa)).

The protein belongs to the tRNA nucleotidyltransferase/poly(A) polymerase family. Bacterial CCA-adding enzyme type 2 subfamily. The cofactor is Mg(2+).

The catalysed reaction is a tRNA precursor + 2 CTP + ATP = a tRNA with a 3' CCA end + 3 diphosphate. It carries out the reaction a tRNA with a 3' CCA end + 2 CTP + ATP = a tRNA with a 3' CCACCA end + 3 diphosphate. Functionally, catalyzes the addition and repair of the essential 3'-terminal CCA sequence in tRNAs without using a nucleic acid template. Adds these three nucleotides in the order of C, C, and A to the tRNA nucleotide-73, using CTP and ATP as substrates and producing inorganic pyrophosphate. tRNA 3'-terminal CCA addition is required both for tRNA processing and repair. Also involved in tRNA surveillance by mediating tandem CCA addition to generate a CCACCA at the 3' terminus of unstable tRNAs. While stable tRNAs receive only 3'-terminal CCA, unstable tRNAs are marked with CCACCA and rapidly degraded. The chain is CCA-adding enzyme from Alteromonas mediterranea (strain DSM 17117 / CIP 110805 / LMG 28347 / Deep ecotype).